Here is a 427-residue protein sequence, read N- to C-terminus: Mitochondrial distribution and morphology protein 12 (427 aa).

The SMP-LTD domain maps to 1–387 (MSFDINWNQL…WPSWICIDMN (387 aa)). Basic and acidic residues predominate over residues 81–96 (NDSKDEHLKNHGDGIN). Disordered stretches follow at residues 81–168 (NDSK…APPL) and 387–427 (NDDD…EAGE). Residues 106 to 133 (LDDEDEDDEDDDEDDEDEEEEDEDDYDD) show a composition bias toward acidic residues. The span at 146-161 (LNFNENSTTPSANSFA) shows a compositional bias: polar residues. Residues 387-402 (NDDDDEEEEEESEDND) show a composition bias toward acidic residues. The segment covering 411–427 (NDGKHGDGRTDETEAGE) has biased composition (basic and acidic residues).

Belongs to the MDM12 family. Component of the ER-mitochondria encounter structure (ERMES) or MDM complex, composed of MMM1, MDM10, MDM12 and MDM34. An MMM1 homodimer associates with one molecule of MDM12 on each side in a pairwise head-to-tail manner, and the SMP-LTD domains of MMM1 and MDM12 generate a continuous hydrophobic tunnel for phospholipid trafficking.

It localises to the mitochondrion outer membrane. It is found in the endoplasmic reticulum membrane. Its function is as follows. Component of the ERMES/MDM complex, which serves as a molecular tether to connect the endoplasmic reticulum (ER) and mitochondria. Components of this complex are involved in the control of mitochondrial shape and protein biogenesis, and function in nonvesicular lipid trafficking between the ER and mitochondria. MDM12 is required for the interaction of the ER-resident membrane protein MMM1 and the outer mitochondrial membrane-resident beta-barrel protein MDM10. The MDM12-MMM1 subcomplex functions in the major beta-barrel assembly pathway that is responsible for biogenesis of all mitochondrial outer membrane beta-barrel proteins, and acts in a late step after the SAM complex. The MDM10-MDM12-MMM1 subcomplex further acts in the TOM40-specific pathway after the action of the MDM12-MMM1 complex. Essential for establishing and maintaining the structure of mitochondria and maintenance of mtDNA nucleoids. The polypeptide is Mitochondrial distribution and morphology protein 12 (Candida albicans (strain WO-1) (Yeast)).